We begin with the raw amino-acid sequence, 492 residues long: Catalase isozyme 3 (492 aa).

Active-site residues include His65 and Asn138. Position 347 (Tyr347) interacts with heme.

This sequence belongs to the catalase family. As to quaternary structure, homotetramer. The cofactor is heme. In terms of tissue distribution, abundant in green cotyledons, etiolated cotyledons, green hypocotyl and root, but not in young leaf.

The protein resides in the peroxisome. The enzyme catalyses 2 H2O2 = O2 + 2 H2O. Functionally, occurs in almost all aerobically respiring organisms and serves to protect cells from the toxic effects of hydrogen peroxide. This Cucurbita pepo (Vegetable marrow) protein is Catalase isozyme 3 (CAT3).